The chain runs to 122 residues: MIQQETRLNVADNSGAKQVQCIRVLGGTKKRYASVGDRIVVSVKSASPAGNIKKGAVSKAVVVRTKKEVRRKDGSYIRFDDNAAVLLQNNDELRGTRISGPVARELREKEFMKVVSLAPEVL.

It belongs to the universal ribosomal protein uL14 family. As to quaternary structure, part of the 50S ribosomal subunit. Forms a cluster with proteins L3 and L19. In the 70S ribosome, L14 and L19 interact and together make contacts with the 16S rRNA in bridges B5 and B8.

In terms of biological role, binds to 23S rRNA. Forms part of two intersubunit bridges in the 70S ribosome. The protein is Large ribosomal subunit protein uL14 of Amoebophilus asiaticus (strain 5a2).